The chain runs to 597 residues: Elongation factor 4 (597 aa).

The region spanning 2 to 184 is the tr-type G domain; it reads KNIRNFSIIA…TMIAKIPPPV (183 aa). Residues 14 to 19 and 131 to 134 contribute to the GTP site; these read DHGKST and NKID.

It belongs to the TRAFAC class translation factor GTPase superfamily. Classic translation factor GTPase family. LepA subfamily.

Its subcellular location is the cell inner membrane. The enzyme catalyses GTP + H2O = GDP + phosphate + H(+). Functionally, required for accurate and efficient protein synthesis under certain stress conditions. May act as a fidelity factor of the translation reaction, by catalyzing a one-codon backward translocation of tRNAs on improperly translocated ribosomes. Back-translocation proceeds from a post-translocation (POST) complex to a pre-translocation (PRE) complex, thus giving elongation factor G a second chance to translocate the tRNAs correctly. Binds to ribosomes in a GTP-dependent manner. The chain is Elongation factor 4 from Methylobacillus flagellatus (strain ATCC 51484 / DSM 6875 / VKM B-1610 / KT).